The primary structure comprises 740 residues: Polyribonucleotide nucleotidyltransferase (740 aa).

Mg(2+) contacts are provided by aspartate 514 and aspartate 520. The KH domain occupies 580-639 (PRIITVKIPVDKIGEVIGPKRQMINQIQEDTGAEITIEDDGTIYIGAADGPAAEAARATI). The S1 motif domain maps to 651 to 723 (GERILGSVVK…SRGKLSLIPV (73 aa)).

Belongs to the polyribonucleotide nucleotidyltransferase family. In terms of assembly, homotrimer. Mg(2+) serves as cofactor.

It localises to the cytoplasm. It catalyses the reaction RNA(n+1) + phosphate = RNA(n) + a ribonucleoside 5'-diphosphate. Functionally, involved in mRNA degradation. Catalyzes the phosphorolysis of single-stranded polyribonucleotides processively in the 3'- to 5'-direction. The protein is Polyribonucleotide nucleotidyltransferase of Streptomyces antibioticus.